Reading from the N-terminus, the 131-residue chain is Small ribosomal subunit protein uS12c (131 aa).

It belongs to the universal ribosomal protein uS12 family. In terms of assembly, part of the 30S ribosomal subunit.

It is found in the plastid. The protein localises to the chloroplast. Its function is as follows. With S4 and S5 plays an important role in translational accuracy. Located at the interface of the 30S and 50S subunits. The chain is Small ribosomal subunit protein uS12c (rps12) from Stigeoclonium helveticum (Green alga).